A 451-amino-acid chain; its full sequence is tRNA-2-methylthio-N(6)-dimethylallyladenosine synthase (451 aa).

Residues 6–122 form the MTTase N-terminal domain; it reads RRYHIITFGC…LDQLLEQVWA (117 aa). The [4Fe-4S] cluster site is built by cysteine 15, cysteine 51, cysteine 85, cysteine 157, cysteine 161, and cysteine 164. The 242-residue stretch at 143 to 384 folds into the Radical SAM core domain; it reads RESTVSAWVN…STQAMERSQR (242 aa). The region spanning 383-447 is the TRAM domain; sequence QRYLGRVEEV…AFSLTGEALS (65 aa).

This sequence belongs to the methylthiotransferase family. MiaB subfamily. In terms of assembly, monomer. [4Fe-4S] cluster is required as a cofactor.

Its subcellular location is the cytoplasm. The enzyme catalyses N(6)-dimethylallyladenosine(37) in tRNA + (sulfur carrier)-SH + AH2 + 2 S-adenosyl-L-methionine = 2-methylsulfanyl-N(6)-dimethylallyladenosine(37) in tRNA + (sulfur carrier)-H + 5'-deoxyadenosine + L-methionine + A + S-adenosyl-L-homocysteine + 2 H(+). Functionally, catalyzes the methylthiolation of N6-(dimethylallyl)adenosine (i(6)A), leading to the formation of 2-methylthio-N6-(dimethylallyl)adenosine (ms(2)i(6)A) at position 37 in tRNAs that read codons beginning with uridine. The polypeptide is tRNA-2-methylthio-N(6)-dimethylallyladenosine synthase (Synechocystis sp. (strain ATCC 27184 / PCC 6803 / Kazusa)).